The following is a 255-amino-acid chain: Tabinhibitin 7 (255 aa).

The N-terminal stretch at methionine 1–alanine 23 is a signal peptide. A Cell attachment site motif is present at residues arginine 32–aspartate 34. One can recognise an SCP domain in the interval leucine 67–phenylalanine 211.

This sequence belongs to the CRISP family. As to expression, expressed in salivary glands.

It localises to the secreted. In terms of biological role, inhibits platelet aggregation induced by all agonists tested (ADP, arachidonic acid, the thromboxane A2 analog U46619, thrombin, and snake venom snaclecs (TMVA that activates platelet through GPIB, and stejnulxin that specifically acts through GPVI (GP6))). May act by competing with fibrinogen for binding to glycoprotein IIb/IIIa (ITGA2B/ITGB3). This is Tabinhibitin 7 from Tabanus yao (Horsefly).